Consider the following 471-residue polypeptide: Ribulose bisphosphate carboxylase large chain (471 aa).

Substrate-binding residues include asparagine 115 and threonine 165. Lysine 167 functions as the Proton acceptor in the catalytic mechanism. Substrate is bound at residue lysine 169. Mg(2+)-binding residues include lysine 193, aspartate 195, and glutamate 196. Lysine 193 is subject to N6-carboxylysine. The Proton acceptor role is filled by histidine 286. The substrate site is built by arginine 287, histidine 319, and serine 371.

The protein belongs to the RuBisCO large chain family. Type I subfamily. As to quaternary structure, heterohexadecamer of 8 large chains and 8 small chains. Mg(2+) serves as cofactor.

Its subcellular location is the carboxysome. It catalyses the reaction 2 (2R)-3-phosphoglycerate + 2 H(+) = D-ribulose 1,5-bisphosphate + CO2 + H2O. It carries out the reaction D-ribulose 1,5-bisphosphate + O2 = 2-phosphoglycolate + (2R)-3-phosphoglycerate + 2 H(+). In terms of biological role, ruBisCO catalyzes two reactions: the carboxylation of D-ribulose 1,5-bisphosphate, the primary event in carbon dioxide fixation, as well as the oxidative fragmentation of the pentose substrate in the photorespiration process. Both reactions occur simultaneously and in competition at the same active site. The polypeptide is Ribulose bisphosphate carboxylase large chain (Synechococcus sp. (strain RCC307)).